The sequence spans 68 residues: U4-agatoxin-Ao1a (68 aa).

The N-terminal stretch at 1–25 is a signal peptide; the sequence is MKKSTVIVLSLAAFVLLSVMQFSAA. Positions 26–36 are excised as a propeptide; sequence EDIKMEVEEQR. 4 disulfides stabilise this stretch: cysteine 39–cysteine 52, cysteine 46–cysteine 57, cysteine 51–cysteine 66, and cysteine 59–cysteine 64.

Belongs to the neurotoxin 33 family. In terms of tissue distribution, expressed by the venom gland.

The protein localises to the secreted. In Agelena orientalis (Funnel-web spider), this protein is U4-agatoxin-Ao1a.